A 436-amino-acid chain; its full sequence is Transcriptional regulator STP3 (436 aa).

The segment at 204–277 (EPLDDEFVPP…TKRKYTKKKQ (74 aa)) is disordered. A compositionally biased stretch (low complexity) spans 230–265 (ISPPASSDSSSSSSYVPQLIPSSSSSVTSNGDSPVS). Residues 268 to 277 (TKRKYTKKKQ) show a composition bias toward basic residues. Residues 315 to 337 (FDCPSCDASFKVKGYLTRHLKKH) form a C2H2-type zinc finger.

In terms of processing, activated by the amino acid-induced proteolytic removal of an N-terminal inhibitory domain.

Its subcellular location is the cell membrane. It is found in the nucleus. Functionally, transcription factor that activates genes required for degradation of extracellular protein and uptake of peptides such as the secreted aspartyl protease SAP2 or the oligopeptide transporter OPT1. Required for virulence. Synthesized as latent cytoplasmic precursor, which, upon a signal initiated by the plasma membrane SPS amino acid sensor system (including CSY1 and CSH3), becomes proteolytically activated and relocates to the nucleus, where it induces the expression of SPS-sensor-regulated genes. The chain is Transcriptional regulator STP3 (STP3) from Candida albicans (strain SC5314 / ATCC MYA-2876) (Yeast).